The chain runs to 265 residues: Urease accessory protein UreH (265 aa).

It belongs to the UreD family. In terms of assembly, ureH, UreF and UreG form a complex that acts as a GTP-hydrolysis-dependent molecular chaperone, activating the urease apoprotein by helping to assemble the nickel containing metallocenter of UreC. The UreE protein probably delivers the nickel.

The protein localises to the cytoplasm. Required for maturation of urease via the functional incorporation of the urease nickel metallocenter. This chain is Urease accessory protein UreH, found in Helicobacter pylori (strain G27).